We begin with the raw amino-acid sequence, 300 residues long: Ribosomal protein L11 methyltransferase (300 aa).

S-adenosyl-L-methionine contacts are provided by threonine 152, glycine 173, aspartate 195, and asparagine 234.

It belongs to the methyltransferase superfamily. PrmA family.

Its subcellular location is the cytoplasm. It catalyses the reaction L-lysyl-[protein] + 3 S-adenosyl-L-methionine = N(6),N(6),N(6)-trimethyl-L-lysyl-[protein] + 3 S-adenosyl-L-homocysteine + 3 H(+). Methylates ribosomal protein L11. The protein is Ribosomal protein L11 methyltransferase of Burkholderia multivorans (strain ATCC 17616 / 249).